The following is a 331-amino-acid chain: Neuropeptides B/W receptor type 1 (331 aa).

The Extracellular segment spans residues 1–43 (MHNASYWGPERANTSCPAPAPTLGCPNASGPAPPLPPPLAVAV). N-linked (GlcNAc...) asparagine glycosylation is found at Asn-3, Asn-13, and Asn-27. A helical transmembrane segment spans residues 44 to 66 (PVVYAVICAVGLAGNSAVLFVLL). The Cytoplasmic portion of the chain corresponds to 67–75 (RAPRRKTVT). A helical transmembrane segment spans residues 76 to 100 (NLFILNLAVADELFTLVPPVNIADF). Residues 101–115 (LLRRWPFGELLCKLV) are Extracellular-facing. Cys-112 and Cys-191 are joined by a disulfide. A helical transmembrane segment spans residues 116 to 135 (VAVDQYNTFSSLYFLTVMSA). The Cytoplasmic segment spans residues 136–160 (DRYLVVLATAESRRVAGRTYGAARA). A helical membrane pass occupies residues 161-180 (VSLAVWGVATLVVLPFAVFA). The Extracellular portion of the chain corresponds to 181 to 205 (RLDEEQGRRQCVLVFPQPEALWWRA). A helical membrane pass occupies residues 206–227 (SRLYTLVLGFAIPVSTICVLYT). Residues 228–251 (SLLCRLRAIRLDSHAKALDRAKKR) are Cytoplasmic-facing. The helical transmembrane segment at 252 to 276 (VTVLVVAILAVCLLVWTPYHLSTVV) threads the bilayer. Residues 277 to 286 (ALTTDLPQTP) lie on the Extracellular side of the membrane. Residues 287–301 (LVIAVSYFITSLSYA) form a helical membrane-spanning segment. Topologically, residues 302 to 331 (NSCLNPFLYAFLDDSFRRSLRQLLACRTTS) are cytoplasmic.

This sequence belongs to the G-protein coupled receptor 1 family.

The protein resides in the cell membrane. Its function is as follows. Interacts specifically with a number of opioid ligands. Receptor for neuropeptides B and W, which may be involved in neuroendocrine system regulation, food intake and the organization of other signals. The chain is Neuropeptides B/W receptor type 1 (NPBWR1) from Bos taurus (Bovine).